The following is a 573-amino-acid chain: Urease subunit alpha (573 aa).

In terms of domain architecture, Urease spans G136–F573. 3 residues coordinate Ni(2+): H141, H143, and K224. K224 carries the post-translational modification N6-carboxylysine. H226 contacts substrate. The Ni(2+) site is built by H253 and H279. The active-site Proton donor is the H327. D367 serves as a coordination point for Ni(2+).

This sequence belongs to the metallo-dependent hydrolases superfamily. Urease alpha subunit family. As to quaternary structure, heterotrimer of UreA (gamma), UreB (beta) and UreC (alpha) subunits. Three heterotrimers associate to form the active enzyme. Requires Ni cation as cofactor. Carboxylation allows a single lysine to coordinate two nickel ions.

The protein resides in the cytoplasm. It catalyses the reaction urea + 2 H2O + H(+) = hydrogencarbonate + 2 NH4(+). It functions in the pathway nitrogen metabolism; urea degradation; CO(2) and NH(3) from urea (urease route): step 1/1. The sequence is that of Urease subunit alpha from Mycobacterium sp. (strain JLS).